The sequence spans 360 residues: MRLMKSYKNLKEEVWDTNRCSGCGACVAVCPVNNLYFREESPVKFECDECSCIIVPADIVEHPISAEFCKTVVYDVPCGACYDACPRIKKSAIPKPKGLGNILKAVRAKASIEIKNAQNGGVVTAILANAFDEGLIDGAIVMMDDKWTLEPESYLALSKEDVLKSAGSKYLWKGPILKALKTAVMEKKLKKLAVVGTPCVINAIYQILSSDNDLLKPFREAIRLKIALFCFETYDYSKMIKKLNEDGIEPWEVKKMDIESGKLKITLINGNTVEYKLKDVESAMRNGCKVCGDFTGLTSDISVGNVGTEKGYSTVLIRNKWGEGFFKRAVYNGYITYDENVDLEAVEKLVELKKKRVKKD.

Residues 11–40 form the 4Fe-4S ferredoxin-type domain; it reads KEEVWDTNRCSGCGACVAVCPVNNLYFREE.

The protein belongs to the FrhB family.

This is an uncharacterized protein from Methanocaldococcus jannaschii (strain ATCC 43067 / DSM 2661 / JAL-1 / JCM 10045 / NBRC 100440) (Methanococcus jannaschii).